The sequence spans 119 residues: Phenol 2-monooxygenase, oxygenase component DmpO (119 aa).

In terms of assembly, the multicomponent enzyme phenol hydroxylase is formed by DmpL (P1 component), DmpM (P2 component), DmpN (P3 component), DmpO (P4 component) and DmpP (P5 component). The oxygenase component is a dimer composed of three subunits, DmpL, DmpN and DmpO (DmpLNO).

The catalysed reaction is phenol + NADH + O2 + H(+) = catechol + NAD(+) + H2O. It participates in aromatic compound metabolism; phenol degradation. With respect to regulation, requires DmpM for efficient turnover. The activity of DmpLNO oxygenase is inhibited by dithiothreitol (DTT) by a mechanism apparently involving H(2)O(2) generation. Its function is as follows. Part of a multicomponent enzyme which catalyzes the degradation of phenol and some of its methylated derivatives. DmpL, DmpN and DmpO form the oxygenase component of the complex. Required for growth on phenol and for in vitro phenol hydroxylase activity. This is Phenol 2-monooxygenase, oxygenase component DmpO from Pseudomonas sp. (strain CF600).